The primary structure comprises 162 residues: 2-C-methyl-D-erythritol 2,4-cyclodiphosphate synthase (162 aa).

Positions 12 and 14 each coordinate a divalent metal cation. 4-CDP-2-C-methyl-D-erythritol 2-phosphate contacts are provided by residues 12 to 14 (DVH) and 38 to 39 (HS). H46 contributes to the a divalent metal cation binding site. Residues 60–62 (DIG), 65–69 (FPDTD), and R146 contribute to the 4-CDP-2-C-methyl-D-erythritol 2-phosphate site.

The protein belongs to the IspF family. As to quaternary structure, homotrimer. It depends on a divalent metal cation as a cofactor.

It carries out the reaction 4-CDP-2-C-methyl-D-erythritol 2-phosphate = 2-C-methyl-D-erythritol 2,4-cyclic diphosphate + CMP. Its pathway is isoprenoid biosynthesis; isopentenyl diphosphate biosynthesis via DXP pathway; isopentenyl diphosphate from 1-deoxy-D-xylulose 5-phosphate: step 4/6. In terms of biological role, involved in the biosynthesis of isopentenyl diphosphate (IPP) and dimethylallyl diphosphate (DMAPP), two major building blocks of isoprenoid compounds. Catalyzes the conversion of 4-diphosphocytidyl-2-C-methyl-D-erythritol 2-phosphate (CDP-ME2P) to 2-C-methyl-D-erythritol 2,4-cyclodiphosphate (ME-CPP) with a corresponding release of cytidine 5-monophosphate (CMP). The sequence is that of 2-C-methyl-D-erythritol 2,4-cyclodiphosphate synthase from Bordetella bronchiseptica (strain ATCC BAA-588 / NCTC 13252 / RB50) (Alcaligenes bronchisepticus).